The sequence spans 410 residues: Peptidase T (410 aa).

A Zn(2+)-binding site is contributed by H79. D81 is an active-site residue. Residue D142 coordinates Zn(2+). E176 acts as the Proton acceptor in catalysis. Positions 177, 199, and 381 each coordinate Zn(2+).

The protein belongs to the peptidase M20B family. The cofactor is Zn(2+).

The protein localises to the cytoplasm. It catalyses the reaction Release of the N-terminal residue from a tripeptide.. Functionally, cleaves the N-terminal amino acid of tripeptides. In Bacillus subtilis (strain 168), this protein is Peptidase T (pepT).